The following is a 254-amino-acid chain: Methyltransferase-like protein 23 (254 aa).

A disordered region spans residues 1-27 (MKSFIFRQNPRKQQQEQNNLVDYSDSD). A compositionally biased stretch (polar residues) spans 11–21 (RKQQQEQNNLV).

It belongs to the methyltransferase superfamily. METTL23 family.

Its function is as follows. Probable methyltransferase. This Dictyostelium discoideum (Social amoeba) protein is Methyltransferase-like protein 23.